Consider the following 225-residue polypeptide: Uridylate kinase (225 aa).

Residue glycine 9–serine 10 participates in ATP binding. Glycine 44 lines the UMP pocket. ATP-binding residues include glycine 45 and arginine 49. UMP-binding positions include aspartate 66 and threonine 114 to threonine 120. The ATP site is built by threonine 140, asparagine 141, tyrosine 146, and aspartate 149.

It belongs to the UMP kinase family. In terms of assembly, homohexamer.

It is found in the cytoplasm. It catalyses the reaction UMP + ATP = UDP + ADP. It functions in the pathway pyrimidine metabolism; CTP biosynthesis via de novo pathway; UDP from UMP (UMPK route): step 1/1. Inhibited by UTP. Catalyzes the reversible phosphorylation of UMP to UDP. This is Uridylate kinase from Thermococcus kodakarensis (strain ATCC BAA-918 / JCM 12380 / KOD1) (Pyrococcus kodakaraensis (strain KOD1)).